The chain runs to 334 residues: 6-phosphogluconolactonase (334 aa).

The protein belongs to the cycloisomerase 2 family.

The catalysed reaction is 6-phospho-D-glucono-1,5-lactone + H2O = 6-phospho-D-gluconate + H(+). The protein operates within carbohydrate degradation; pentose phosphate pathway; D-ribulose 5-phosphate from D-glucose 6-phosphate (oxidative stage): step 2/3. In terms of biological role, catalyzes the hydrolysis of 6-phosphogluconolactone to 6-phosphogluconate. The protein is 6-phosphogluconolactonase of Buchnera aphidicola subsp. Acyrthosiphon pisum (strain 5A).